A 433-amino-acid polypeptide reads, in one-letter code: Epi-neemfruitin B synthase L1AT (433 aa).

Active-site proton acceptor residues include His151 and Asp372.

It belongs to the plant acyltransferase family. As to quaternary structure, monomer. In terms of tissue distribution, mainly expressed in petioles and, to a lower extent, in roots.

It catalyses the reaction (21S)-21-acetyl-1-hydroxy-apo-melianone + acetyl-CoA = epi-neemfruitin B + acetate + CoA + H(+). Its pathway is secondary metabolite biosynthesis; terpenoid biosynthesis. Its function is as follows. Acetyltransferase involved in the biosynthesis of limonoids triterpene natural products such as azadirachtin, an antifeedant widely used as bioinsecticide, and possessing many medicinal applications including anti-tumoral, anti-malarial, anti-rheumatic, antibacterial, anti-inflammatory, anti-pyretic and diuretic effects. Catalyzes the formation of epi-neemfruitin B from (21S)-21-acetyl-1-hydroxy-apo-melianone. This Melia azedarach (Chinaberry tree) protein is Epi-neemfruitin B synthase L1AT.